We begin with the raw amino-acid sequence, 411 residues long: Carbohydrate sulfotransferase 1 (411 aa).

Topologically, residues 1-2 (MQ) are cytoplasmic. A helical; Signal-anchor for type II membrane protein transmembrane segment spans residues 3 to 23 (CSWKAVLLLALASIAIQYTAI). The Lumenal portion of the chain corresponds to 24–411 (RTFTAKSFHT…VEERDFRPFL (388 aa)). N-linked (GlcNAc...) asparagine glycosylation is present at N56. 69–75 (TRSGSSF) contacts 3'-phosphoadenylyl sulfate. Residues N145 and N189 are each glycosylated (N-linked (GlcNAc...) asparagine). 234–242 (RDPRGILAS) is a 3'-phosphoadenylyl sulfate binding site. N334 carries N-linked (GlcNAc...) asparagine glycosylation. A Cell attachment site motif is present at residues 337 to 339 (RGD).

It belongs to the sulfotransferase 1 family. Gal/GlcNAc/GalNAc subfamily. Broadly expressed with highest levels in central nervous system. Expressed in cortex (at protein level). Expressed in high endothelial venules in peripheral lymph nodes, mesenteric lymph nodes and Peyer's patches.

It is found in the golgi apparatus membrane. It catalyses the reaction 3'-phosphoadenylyl sulfate + keratan = adenosine 3',5'-bisphosphate + keratan 6'-sulfate.. The protein operates within glycan metabolism. Sulfotransferase that utilizes 3'-phospho-5'-adenylyl sulfate (PAPS) as sulfonate donor to catalyze the transfer of sulfate to position 6 of internal galactose (Gal) residues of keratan. Cooperates with B4GALT4 and B3GNT7 glycosyltransferases and CHST6 sulfotransferase to construct and elongate disulfated disaccharide unit [-&gt;3(6-sulfoGalbeta)1-&gt;4(6-sulfoGlcNAcbeta)1-&gt;] within keratan sulfate polymer. Has a preference for sulfating keratan sulfate, but it also transfers sulfate to the unsulfated polymer. Involved in biosynthesis of phosphacan, a major keratan sulfate proteoglycan in the developing brain. Involved in biosynthesis of 6-sulfoGalbeta-containing O-linked glycans in high endothelial venules of lymph nodes. May act in a synergistic manner with CHST4 to generate sialyl 6',6-disulfo Lewis X motif, a recognition determinant for immune cell receptors implicated in leukocyte trafficking. Catalyzes sulfation of N-acetyllactosamine (LacNAc) oligosaccharides with highest efficiency for sialylated LacNAc structures. The protein is Carbohydrate sulfotransferase 1 (Chst1) of Mus musculus (Mouse).